A 206-amino-acid chain; its full sequence is Ras-related protein O-RAL (206 aa).

21 to 28 (GSGGVGKS) provides a ligand contact to GTP. The short motif at 43-51 (YEPTKADSY) is the Effector region element. GTP-binding positions include 68 to 72 (DTAGQ) and 128 to 131 (NKSD). Over residues 180–189 (KMSENKDKNG) the composition is skewed to basic and acidic residues. The disordered stretch occupies residues 180 to 206 (KMSENKDKNGKKSSRNKKSLRERCCIL). C203 carries the cysteine methyl ester modification. Residue C203 is the site of S-geranylgeranyl cysteine attachment. Positions 204–206 (CIL) are cleaved as a propeptide — removed in mature form.

Belongs to the small GTPase superfamily. Ras family.

The protein resides in the cell membrane. The enzyme catalyses GTP + H2O = GDP + phosphate + H(+). This Diplobatis ommata (Ocellated electric ray) protein is Ras-related protein O-RAL.